Here is a 245-residue protein sequence, read N- to C-terminus: MRYKITIEYNGSSFSGWQKQQHSANSIQETIENAIFNFSGERVSLHCGGRTDTGVHALGQVAHFNMERQFELYRIRNGINYHLKAIPIVVLSAEAVDDAFHARFSAKKRYYEYRIINRYAPAALEIGYVWQVFNPLDVNIMREAARHLLGKHNLSSFRSKDCQATNPVRTIDDIDIVQNGSHIYIKISAISFLHNQVRIIVGTLVEFGKNRTNPQEMLNILSQCKRNAAGITAPPHGLYLVKIDY.

The active-site Nucleophile is the Asp52. Residue Tyr111 coordinates substrate.

Belongs to the tRNA pseudouridine synthase TruA family. Homodimer.

It carries out the reaction uridine(38/39/40) in tRNA = pseudouridine(38/39/40) in tRNA. Functionally, formation of pseudouridine at positions 38, 39 and 40 in the anticodon stem and loop of transfer RNAs. The protein is tRNA pseudouridine synthase A of Wolbachia pipientis subsp. Culex pipiens (strain wPip).